A 156-amino-acid chain; its full sequence is CD-NTase/cGAS isopeptidase (156 aa).

The 141-residue stretch at 16–156 folds into the MPN domain; that stretch reads LVVIMGHVVT…LITVFKKIES (141 aa). The active-site Proton donor/acceptor is the Glu39. 3 residues coordinate Zn(2+): His101, His103, and Asp114. A JAMM motif motif is present at residues 101 to 114; that stretch reads HTHPEDRPFPSATD.

Belongs to the peptidase M67B family. Cap3 isopeptidase subfamily. Requires Zn(2+) as cofactor.

Cleavage of conjugated proteins is inhibited by EDTA. Metalloprotease priming reversal component of a CBASS system. CBASS (cyclic oligonucleotide-based antiphage signaling system) provides immunity against bacteriophages. The CD-NTase protein (DncV) synthesizes cyclic nucleotides in response to infection; these serve as specific second messenger signals. The signals activate a diverse range of effectors, leading to bacterial cell death and thus abortive phage infection. A type II-A(GA) CBASS system. In terms of biological role, reverses the primed state of DncV, the CD-NTase. Cleaves a DncV-GFP (green fluorescent protein) fusion protein precisely at the C-terminus of DncV. Overexpression decreases the efficacy of CBASS protection against phages T2, T4, T5 and T6, blocks formation of DncV-conjugates in vivo, and inhibits in vivo activation of DncV. Antagonism of phage defense upon overexpression is CBASS-system specific, Cap3 from this bacteria only antagonizes its cognate CBASS system and not that of C.freundii, E.coli or E.hormaechei. Functionally, protects E.coli against phage infection. When the CBASS operon (capV-dncV-cap2-cap3) is introduced in E.coli MG1655 there is about 100-fold protection against phages P1 and T2. When the operon is introduced in E.coli MG1655 there is a more than 10(3) decrease in the efficiency of T2 plaque formation. Protects 100-fold against phage T5, offers no protection against T7. When the operon is introduced in E.coli MG1655 it protects against phages T2, T4, T5 and T6. Another paper shows the operon confers protection against phages P1, T2, T5 and T6 but not T4 or lambda. This chain is CD-NTase/cGAS isopeptidase, found in Vibrio cholerae serotype O1 (strain ATCC 39315 / El Tor Inaba N16961).